The following is a 686-amino-acid chain: Pollen receptor-like kinase 5 (686 aa).

The N-terminal stretch at 1–39 is a signal peptide; that stretch reads MRNWEDPFTLACNTALKKNLPSCIFIIIFISVLCPVAMS. Residues 40–283 are Extracellular-facing; that stretch reads QVVVPDSDAD…GKKAGSFYTL (244 aa). N-linked (GlcNAc...) asparagine glycosylation occurs at Asn60. 5 LRR repeats span residues 112–135, 136–159, 161–184, 185–208, and 210–230; these read MKNL…VKRF, TSLK…AFLG, PLLK…LASL, PMLL…QQKD, and KLAS…LRNM. A helical membrane pass occupies residues 284 to 304; the sequence is AIILIVIGIILVIIALVFCFV. Over 305–686 the chain is Cytoplasmic; the sequence is QSRRRNFLSA…DDDFGFSMNR (382 aa). A compositionally biased stretch (polar residues) spans 328–339; it reads NYHQSTNKNNKP. The tract at residues 328-355 is disordered; the sequence is NYHQSTNKNNKPAESVNHTRRGSMPDPG. The region spanning 375–648 is the Protein kinase domain; that stretch reads RASAEVLGSG…REVVEMVEML (274 aa). Ser377 carries the phosphoserine modification. Residues 381–389 and Lys403 each bind ATP; that span reads LGSGTFGAS. Phosphoserine occurs at positions 455 and 458. Residue Thr472 is modified to Phosphothreonine. Position 542 is a phosphotyrosine (Tyr542). A Phosphoserine modification is found at Ser545.

This sequence belongs to the protein kinase superfamily. Ser/Thr protein kinase family. Interacts with the GRI peptide. As to expression, expressed in pollen and/or in flowers. Detected at low levels in leaves.

It is found in the cell membrane. The enzyme catalyses L-seryl-[protein] + ATP = O-phospho-L-seryl-[protein] + ADP + H(+). The catalysed reaction is L-threonyl-[protein] + ATP = O-phospho-L-threonyl-[protein] + ADP + H(+). Its function is as follows. Receptor-like kinase involved in the control of pollen germination and pollen tube polar growth. The extracellular domain serves as a sensor for peptides derived from GRI. May act as a downstream element for ROS-dependent cell death induced by GRI. The sequence is that of Pollen receptor-like kinase 5 from Arabidopsis thaliana (Mouse-ear cress).